An 87-amino-acid chain; its full sequence is Small ribosomal subunit protein bS20 (87 aa).

Residues 1 to 10 (MANIKSKQKR) show a composition bias toward basic residues. The interval 1–27 (MANIKSKQKRILTNEKSRQRNKSVRSA) is disordered.

It belongs to the bacterial ribosomal protein bS20 family.

In terms of biological role, binds directly to 16S ribosomal RNA. The chain is Small ribosomal subunit protein bS20 from Corynebacterium aurimucosum (strain ATCC 700975 / DSM 44827 / CIP 107346 / CN-1) (Corynebacterium nigricans).